Reading from the N-terminus, the 200-residue chain is Holliday junction branch migration complex subunit RuvA (200 aa).

A domain I region spans residues 1–64; the sequence is MIAKLKGLLD…ENDMRLLGFA (64 aa). Positions 65–143 are domain II; the sequence is EASERDWFRL…ALPSAPGGAA (79 aa). The segment at 144–154 is flexible linker; the sequence is MAANPAGGASA. Residues 154 to 200 form a domain III region; that stretch reads ADAVSALENLGFKPAIAARAVATAQGELGEGASESELIRVALKRAAG.

It belongs to the RuvA family. As to quaternary structure, homotetramer. Forms an RuvA(8)-RuvB(12)-Holliday junction (HJ) complex. HJ DNA is sandwiched between 2 RuvA tetramers; dsDNA enters through RuvA and exits via RuvB. An RuvB hexamer assembles on each DNA strand where it exits the tetramer. Each RuvB hexamer is contacted by two RuvA subunits (via domain III) on 2 adjacent RuvB subunits; this complex drives branch migration. In the full resolvosome a probable DNA-RuvA(4)-RuvB(12)-RuvC(2) complex forms which resolves the HJ.

The protein localises to the cytoplasm. Functionally, the RuvA-RuvB-RuvC complex processes Holliday junction (HJ) DNA during genetic recombination and DNA repair, while the RuvA-RuvB complex plays an important role in the rescue of blocked DNA replication forks via replication fork reversal (RFR). RuvA specifically binds to HJ cruciform DNA, conferring on it an open structure. The RuvB hexamer acts as an ATP-dependent pump, pulling dsDNA into and through the RuvAB complex. HJ branch migration allows RuvC to scan DNA until it finds its consensus sequence, where it cleaves and resolves the cruciform DNA. This Erythrobacter litoralis (strain HTCC2594) protein is Holliday junction branch migration complex subunit RuvA.